The primary structure comprises 157 residues: Endoribonuclease YbeY (157 aa).

3 residues coordinate Zn(2+): H115, H119, and H125.

This sequence belongs to the endoribonuclease YbeY family. It depends on Zn(2+) as a cofactor.

It localises to the cytoplasm. Functionally, single strand-specific metallo-endoribonuclease involved in late-stage 70S ribosome quality control and in maturation of the 3' terminus of the 16S rRNA. This is Endoribonuclease YbeY from Micrococcus luteus (strain ATCC 4698 / DSM 20030 / JCM 1464 / CCM 169 / CCUG 5858 / IAM 1056 / NBRC 3333 / NCIMB 9278 / NCTC 2665 / VKM Ac-2230) (Micrococcus lysodeikticus).